The following is a 424-amino-acid chain: Serine incorporator 5 (424 aa).

The Extracellular segment spans residues 1–6; the sequence is MYALYF. The chain crosses the membrane as a helical span at residues 7 to 23; it reads ILVVVLCCIMMSTTVAH. Residues 24 to 52 lie on the Cytoplasmic side of the membrane; it reads KMKEHIPFFEDMCKGIKAGDTCEKLVGYS. Residues 53–73 traverse the membrane as a helical segment; the sequence is AVYRVCFGMACFFFIFCLLTL. Over 74–87 the chain is Extracellular; the sequence is KINNSKSCRAHIHN. Asn-76 carries an N-linked (GlcNAc...) asparagine glycan. Residues 88–108 form a helical membrane-spanning segment; that stretch reads GFWFFKLLLLGAMCSGAFFIP. Residues 109–119 lie on the Cytoplasmic side of the membrane; sequence DQDTFLNAWRY. Residues 120-140 form a helical membrane-spanning segment; that stretch reads VGAVGGFLFIGIQLLLLVEFA. Residues 141 to 161 are Extracellular-facing; that stretch reads HKWNKNWTAGTASNKLWYASL. Asn-146 carries an N-linked (GlcNAc...) asparagine glycan. The chain crosses the membrane as a helical span at residues 162–182; it reads ALVTLIMYSIATGGLVLMAVF. Residues 183–193 are Cytoplasmic-facing; the sequence is YTQKDGCMENK. The chain crosses the membrane as a helical span at residues 194 to 214; sequence ILLGVNGGLCVLISLVAISPC. Residues 215 to 221 are Extracellular-facing; the sequence is VQNRQPH. Residues 222 to 242 traverse the membrane as a helical segment; sequence SGLLQSGVISCYVTYLTFSAL. Residues 243–274 lie on the Cytoplasmic side of the membrane; that stretch reads SSKPAEVVLDEHGKNVTICVPDFGQDLYRDEN. Residues 275–295 form a helical membrane-spanning segment; it reads LVTILGTSLLIGCILYSCLTS. At 296–348 the chain is on the extracellular side; the sequence is TTRSSSDALQGRYAAPELEIARCCFCFSPGGEDTEEQQQGKEGPRVIYDEKKG. A helical membrane pass occupies residues 349–369; the sequence is TVYIYSYFHFVFFLASLYVMM. Residues 370-391 lie on the Cytoplasmic side of the membrane; that stretch reads TVTNWFNYESANIESFFSGSWS. The chain crosses the membrane as a helical span at residues 392 to 412; the sequence is IFWVKMASCWICVLLYLCTLV. The Extracellular portion of the chain corresponds to 413-424; that stretch reads APLCCPTREFSV.

The protein belongs to the TDE1 family.

The protein resides in the cell membrane. It carries out the reaction a 1,2-diacyl-sn-glycero-3-phospho-L-serine(in) = a 1,2-diacyl-sn-glycero-3-phospho-L-serine(out). It catalyses the reaction a 1,2-diacyl-sn-glycero-3-phosphocholine(in) = a 1,2-diacyl-sn-glycero-3-phosphocholine(out). The enzyme catalyses a 1,2-diacyl-sn-glycero-3-phosphoethanolamine(in) = a 1,2-diacyl-sn-glycero-3-phosphoethanolamine(out). In terms of biological role, restriction factor required to restrict infectivity of gammaretroviruses: acts by inhibiting an early step of viral infection. Impairs the penetration of the viral particle into the cytoplasm. Non-ATP-dependent, non-specific lipid transporter for phosphatidylserine, phosphatidylcholine, and phosphatidylethanolamine. Functions as a scramblase that flips lipids in both directions across the membrane. Phospholipid scrambling results in gammaretroviral surface exposure of phosphatidylserine and loss of membrane asymmetry, which leads to loss of infectivity. Enhances the incorporation of serine into phosphatidylserine and sphingolipids. May play a role in providing serine molecules for the formation of myelin glycosphingolipids in oligodendrocytes. This chain is Serine incorporator 5 (SERINC5), found in Macaca fascicularis (Crab-eating macaque).